Reading from the N-terminus, the 559-residue chain is Glutamine--tRNA ligase (559 aa).

A 'HIGH' region motif is present at residues 44–54 (PEPNGYLHIGH). ATP-binding positions include 45-47 (EPN) and 51-57 (HIGHAKS). L-glutamine contacts are provided by Asp77 and Tyr222. Residues Thr241 and 272–273 (RL) each bind ATP. The 'KMSKS' region signature appears at 279-283 (LTSKR).

Belongs to the class-I aminoacyl-tRNA synthetase family. As to quaternary structure, monomer.

The protein resides in the cytoplasm. The catalysed reaction is tRNA(Gln) + L-glutamine + ATP = L-glutaminyl-tRNA(Gln) + AMP + diphosphate. This chain is Glutamine--tRNA ligase, found in Actinobacillus succinogenes (strain ATCC 55618 / DSM 22257 / CCUG 43843 / 130Z).